Here is a 167-residue protein sequence, read N- to C-terminus: Small ribosomal subunit protein uS5 (167 aa).

Positions 12-75 constitute an S5 DRBM domain; sequence LEERVVTINR…EDAKKNMVFV (64 aa).

This sequence belongs to the universal ribosomal protein uS5 family. In terms of assembly, part of the 30S ribosomal subunit. Contacts proteins S4 and S8.

Its function is as follows. With S4 and S12 plays an important role in translational accuracy. Functionally, located at the back of the 30S subunit body where it stabilizes the conformation of the head with respect to the body. In Listeria innocua serovar 6a (strain ATCC BAA-680 / CLIP 11262), this protein is Small ribosomal subunit protein uS5.